A 129-amino-acid chain; its full sequence is Small ribosomal subunit protein uS11 (129 aa).

The protein belongs to the universal ribosomal protein uS11 family. As to quaternary structure, part of the 30S ribosomal subunit. Interacts with proteins S7 and S18. Binds to IF-3.

Its function is as follows. Located on the platform of the 30S subunit, it bridges several disparate RNA helices of the 16S rRNA. Forms part of the Shine-Dalgarno cleft in the 70S ribosome. In Erwinia tasmaniensis (strain DSM 17950 / CFBP 7177 / CIP 109463 / NCPPB 4357 / Et1/99), this protein is Small ribosomal subunit protein uS11.